The following is a 599-amino-acid chain: Elongation factor 4 (599 aa).

Positions 2-184 (KNIRNFSIIA…RLVRDIPPPQ (183 aa)) constitute a tr-type G domain. Residues 14 to 19 (DHGKST) and 131 to 134 (NKID) contribute to the GTP site.

The protein belongs to the TRAFAC class translation factor GTPase superfamily. Classic translation factor GTPase family. LepA subfamily.

The protein resides in the cell inner membrane. It catalyses the reaction GTP + H2O = GDP + phosphate + H(+). Required for accurate and efficient protein synthesis under certain stress conditions. May act as a fidelity factor of the translation reaction, by catalyzing a one-codon backward translocation of tRNAs on improperly translocated ribosomes. Back-translocation proceeds from a post-translocation (POST) complex to a pre-translocation (PRE) complex, thus giving elongation factor G a second chance to translocate the tRNAs correctly. Binds to ribosomes in a GTP-dependent manner. The chain is Elongation factor 4 from Salmonella agona (strain SL483).